Consider the following 574-residue polypeptide: Sentrin-specific protease 3 (574 aa).

The tract at residues 1 to 125 is disordered; that stretch reads MKETIQGTGS…PTHRKTCSQR (125 aa). Phosphoserine occurs at positions 54, 73, and 75. Positions 74-93 are enriched in acidic residues; the sequence is ASEEEEEEEEEEDEDEEEEV. The span at 112–125 shows a compositional bias: basic residues; the sequence is RPSRPTHRKTCSQR. 2 consecutive short sequence motifs (nuclear localization signal) follow at residues 125-128 and 153-159; these read RRRR and RHRGRRR. The segment at 161 to 181 is disordered; the sequence is LAHPKNHLSPQQGGATPQVPS. At Ser169 the chain carries Phosphoserine. At Thr176 the chain carries Phosphothreonine. 4 positions are modified to phosphoserine: Ser181, Ser188, Ser212, and Ser232. The interval 386–543 is protease; it reads HVLTMDDLGT…AFVLQYCKHL (158 aa). Active-site residues include His465 and Asp482. Cys532 acts as the Nucleophile in catalysis.

The protein belongs to the peptidase C48 family. In terms of assembly, component of some MLL1/MLL complex, at least composed of the core components KMT2A/MLL1, ASH2L, HCFC1/HCF1, WDR5 and RBBP5, as well as the facultative components BACC1, CHD8, E2F6, HSP70, INO80C, KANSL1, LAS1L, MAX, MCRS1, MGA, MYST1/MOF, PELP1, PHF20, PRP31, RING2, RUVB1/TIP49A, RUVB2/TIP49B, SENP3, TAF1, TAF4, TAF6, TAF7, TAF9 and TEX10. Interacts with EP300, NPM1 and CDCA8. Component of the 5FMC complex, at least composed of PELP1, LAS1L, TEX10, WDR18 and SENP3; the complex interacts with methylated CHTOP and ZNF148. Interacts with NOL9. Interacts with CCAR2.

The protein localises to the nucleus. It localises to the nucleolus. The protein resides in the nucleoplasm. It is found in the cytoplasm. With respect to regulation, on oxidative stress, SENP3 degradation is blocked by inhibition of its ubiquitination, which stabilizes it as it accumulates in the nucleoplasm. Protease that releases SUMO2 and SUMO3 monomers from sumoylated substrates, but has only weak activity against SUMO1 conjugates. Deconjugates SUMO2 from MEF2D, which increases its transcriptional activation capability. Deconjugates SUMO2 and SUMO3 from CDCA8. Redox sensor that, when redistributed into nucleoplasm, can act as an effector to enhance HIF1A transcriptional activity by desumoylating EP300. Required for rRNA processing through deconjugation of SUMO2 and SUMO3 from nucleophosmin, NPM1. Plays a role in the regulation of sumoylation status of ZNF148. Functions as a component of the Five Friends of Methylated CHTOP (5FMC) complex; the 5FMC complex is recruited to ZNF148 by methylated CHTOP, leading to desumoylation of ZNF148 and subsequent transactivation of ZNF148 target genes. Deconjugates SUMO2 from KAT5. Catalyzes desumoylation of MRE11. This Homo sapiens (Human) protein is Sentrin-specific protease 3.